The following is a 435-amino-acid chain: Matrix remodeling-associated protein 8 (435 aa).

Positions 1 to 22 are cleaved as a signal peptide; that stretch reads MEIRCKVLVCHIILLHSATVYL. At 23-337 the chain is on the extracellular side; that stretch reads YSVPASQQNP…QESRLHFFQQ (315 aa). Ig-like V-type domains are found at residues 32-158 and 156-293; these read PESV…LNIT and NITK…LSVS. Residues Asn-41, Asn-120, Asn-156, Asn-245, and Asn-324 are each glycosylated (N-linked (GlcNAc...) asparagine). Cysteines 54 and 138 form a disulfide. Cys-187 and Cys-273 are joined by a disulfide. The helical transmembrane segment at 338 to 358 threads the bilayer; that stretch reads LGYILATLLLFILLLTAVILI. Residues 359-435 are Cytoplasmic-facing; the sequence is TRKHQKRGYA…DLELRKEYCK (77 aa).

Homodimer in cis. Does not appear to form trans-homodimers.

The protein resides in the cell membrane. Functionally, transmembrane protein which can modulate activity of various signaling pathways, probably via binding to integrin ITGAV:ITGB3. Mediates heterophilic cell-cell interactions in vitro. The protein is Matrix remodeling-associated protein 8 (mxra8) of Xenopus laevis (African clawed frog).